The chain runs to 159 residues: Aphid transmission protein (159 aa).

This sequence belongs to the caulimoviridae ORF II family.

Its function is as follows. This protein is involved in virus transmission. The chain is Aphid transmission protein from Cauliflower mosaic virus (strain PV147) (CaMV).